We begin with the raw amino-acid sequence, 155 residues long: Immunoglobulin domain-containing protein oig-4 (155 aa).

Residues 1–22 (MSFRLWGRCIFFFCFLLEAIDS) form the signal peptide. N-linked (GlcNAc...) asparagine glycans are attached at residues asparagine 55 and asparagine 114. Residues 73–154 (GYKLLIICKA…MAKNFKAEYT (82 aa)) form the Ig-like C2-type domain. Residues cysteine 80 and cysteine 136 are joined by a disulfide bond.

As to quaternary structure, interacts with the non-alpha subunit of nicotinic acetylcholine receptor unc-29 and lev-10 to stabilize the complex formed between unc-29 and lev-10. In terms of tissue distribution, expressed in body wall muscle cells, the pharyngeal muscle cell pm6 and in four head neurons.

It localises to the synapse. The protein localises to the secreted. Its function is as follows. Required for the localization of acetylcholine receptors at neuromuscular junctions and for subsequently controlling the response evoked by receptor stimulation. The protein is Immunoglobulin domain-containing protein oig-4 of Caenorhabditis elegans.